The chain runs to 350 residues: Protein pelota homolog (350 aa).

The protein belongs to the eukaryotic release factor 1 family. Pelota subfamily. As to quaternary structure, monomer. The cofactor is a divalent metal cation.

It is found in the cytoplasm. May function in recognizing stalled ribosomes, interact with stem-loop structures in stalled mRNA molecules, and effect endonucleolytic cleavage of the mRNA. May play a role in the release non-functional ribosomes and degradation of damaged mRNAs. Has endoribonuclease activity. This is Protein pelota homolog from Methanosarcina mazei (strain ATCC BAA-159 / DSM 3647 / Goe1 / Go1 / JCM 11833 / OCM 88) (Methanosarcina frisia).